A 393-amino-acid chain; its full sequence is MEDTFLFTSESVNEGHPDKLCDQISDAVLDACLEQDPDSKVACETCTKTNMVMVFGEITTKGNIDYEKIVRDTCRDIGFTSEDVGLDADHCKVLVNIEQQSPDIAQGVHGHFTKRPEEIGAGDQGHMFGYATDETPELMPLSHVLATKLGARLTEVRKNGTCPWLRPDGKTQVTVEYRNDHGAMIPVRVHTVLISTQHDETVTNDEIAADLKEHVIKPVIPEQYLDEKTIFHLNPSGRFVIGGPHGDAGLTGRKIIIDTYGGWGAHGGGAFSGKDPTKVDRSGAYVARQAAKSIVASELARRCIVQVSYAIGVPEPLSVFVDTYGTGKIPDKEILKIVKENFDFRPGLITINLGLKRGGYRYLKTAAYGHFGRDDPDFTWEVVKPLELEKPAA.

Mg(2+) is bound at residue Glu10. ATP is bound at residue His16. A K(+)-binding site is contributed by Glu44. The L-methionine site is built by Glu57 and Gln100. Residues 168–170 (DGK), 236–239 (SGRF), Asp247, 253–254 (RK), Ala270, Lys274, and Lys278 each bind ATP. Asp247 contributes to the L-methionine binding site. Position 278 (Lys278) interacts with L-methionine.

The protein belongs to the AdoMet synthase family. In terms of assembly, homotetramer. The cofactor is Mn(2+). Mg(2+) serves as cofactor. Co(2+) is required as a cofactor. Requires K(+) as cofactor.

The protein resides in the cytoplasm. It catalyses the reaction L-methionine + ATP + H2O = S-adenosyl-L-methionine + phosphate + diphosphate. It participates in amino-acid biosynthesis; S-adenosyl-L-methionine biosynthesis; S-adenosyl-L-methionine from L-methionine: step 1/1. In terms of biological role, catalyzes the formation of S-adenosylmethionine from methionine and ATP. The reaction comprises two steps that are both catalyzed by the same enzyme: formation of S-adenosylmethionine (AdoMet) and triphosphate, and subsequent hydrolysis of the triphosphate. This is S-adenosylmethionine synthase (METK) from Musa acuminata (Banana).